The chain runs to 261 residues: 5'-nucleotidase SurE (261 aa).

A divalent metal cation-binding residues include D8, D9, S43, and N96.

Belongs to the SurE nucleotidase family. A divalent metal cation serves as cofactor.

The protein localises to the cytoplasm. The catalysed reaction is a ribonucleoside 5'-phosphate + H2O = a ribonucleoside + phosphate. Its function is as follows. Nucleotidase that shows phosphatase activity on nucleoside 5'-monophosphates. The polypeptide is 5'-nucleotidase SurE (Cereibacter sphaeroides (strain ATCC 17023 / DSM 158 / JCM 6121 / CCUG 31486 / LMG 2827 / NBRC 12203 / NCIMB 8253 / ATH 2.4.1.) (Rhodobacter sphaeroides)).